Reading from the N-terminus, the 117-residue chain is Large ribosomal subunit protein bL20c (117 aa).

Belongs to the bacterial ribosomal protein bL20 family.

It localises to the plastid. The protein resides in the chloroplast. In terms of biological role, binds directly to 23S ribosomal RNA and is necessary for the in vitro assembly process of the 50S ribosomal subunit. It is not involved in the protein synthesizing functions of that subunit. This is Large ribosomal subunit protein bL20c from Citrus sinensis (Sweet orange).